Here is a 500-residue protein sequence, read N- to C-terminus: Flt3-interacting zinc finger protein 1 (500 aa).

Met-1 is subject to N-acetylmethionine. Residues Met-1 to Ala-24 are disordered. Positions Val-9–Ala-19 are enriched in pro residues. 6 C2H2-type zinc fingers span residues Phe-29–His-51, His-57–His-79, Tyr-85–His-107, Tyr-113–His-136, Phe-204–His-226, and Phe-232–His-254. Disordered stretches follow at residues Asp-255–Val-284 and Lys-306–Glu-328. A compositionally biased stretch (polar residues) spans Leu-256–Trp-267. C2H2-type zinc fingers lie at residues Tyr-336–His-357, Tyr-363–His-386, Phe-418–His-440, Phe-446–His-468, and Phe-474–His-496. Residues Arg-383–Lys-415 are disordered.

Interacts with FLT3 cytoplasmic catalytic domain, following receptor stimulation, in a kinase-independent manner. Does not interact with other structurally related receptor tyrosine kinases, including KIT, CSF1R and PDGFR. Interacts with NRL. As to expression, widely expressed. In the retina, highest expression in the ganglion cell layer.

The protein localises to the cytoplasm. It is found in the nucleus. May be a transcriptional repressor of NRL function in photoreceptors. Does not repress CRX-mediated transactivation. This chain is Flt3-interacting zinc finger protein 1 (Fiz1), found in Mus musculus (Mouse).